Consider the following 968-residue polypeptide: RNA polymerase-associated protein RapA (968 aa).

Residues 164–334 enclose the Helicase ATP-binding domain; it reads DVGRRHAPRV…FARLRLLDPN (171 aa). Residue 177 to 184 participates in ATP binding; that stretch reads DEVGLGKT. Positions 280–283 match the DEAH box motif; sequence DEAH. The Helicase C-terminal domain occupies 490–644; sequence RVEWLMGYLT…TCPTGRTIYD (155 aa).

The protein belongs to the SNF2/RAD54 helicase family. RapA subfamily. Interacts with the RNAP. Has a higher affinity for the core RNAP than for the holoenzyme. Its ATPase activity is stimulated by binding to RNAP.

Transcription regulator that activates transcription by stimulating RNA polymerase (RNAP) recycling in case of stress conditions such as supercoiled DNA or high salt concentrations. Probably acts by releasing the RNAP, when it is trapped or immobilized on tightly supercoiled DNA. Does not activate transcription on linear DNA. Probably not involved in DNA repair. This Enterobacter sp. (strain 638) protein is RNA polymerase-associated protein RapA.